A 318-amino-acid polypeptide reads, in one-letter code: CMRF35-like molecule 8 (318 aa).

An N-terminal signal peptide occupies residues 1–27 (MTQLASAVWLPTLLLLLLLFWLPGCVP). An Ig-like V-type domain is found at 28–129 (LHGPSTMSGS…FDGSLGFDKY (102 aa)). At 28–185 (LHGPSTMSGS…HDYSQGLRLP (158 aa)) the chain is on the extracellular side. Residues Cys46 and Cys113 are joined by a disulfide bond. Asn93 is a glycosylation site (N-linked (GlcNAc...) asparagine). Residues 139–148 (SEDPVSSPGP) show a composition bias toward low complexity. The tract at residues 139–174 (SEDPVSSPGPTLETPVVSTSLPTKGPALGSNTEGHR) is disordered. The chain crosses the membrane as a helical span at residues 186-206 (ALLSVLALLLFLLVGTSLLAW). Residues 207 to 318 (RMFQKRLVKA…PRKGLSDLYL (112 aa)) lie on the Cytoplasmic side of the membrane. Over residues 284–296 (QDSHANGDSLHQP) the composition is skewed to polar residues. The interval 284-318 (QDSHANGDSLHQPQDQKAEYSEIQKPRKGLSDLYL) is disordered. Residues 297 to 308 (QDQKAEYSEIQK) show a composition bias toward basic and acidic residues. Tyr303 is modified (phosphotyrosine).

This sequence belongs to the CD300 family. Upon tyrosine-phosphorylation, interacts with PTN6/SHP-1 and PTPN11/SHP-2 and INPP5D. Post-translationally, phosphorylated on tyrosine. In terms of processing, N-glycosylated. In terms of tissue distribution, present on the surface of the majority of myeloid cells and a subset of B-cells. Present on the surface of NK cells after IL-12 stimulation.

The protein resides in the cell membrane. Inhibitory receptor which may contribute to the down-regulation of cytolytic activity in natural killer (NK) cells, and to the down-regulation of mast cell degranulation. Negatively regulates the Toll-like receptor (TLR) signaling mediated by MYD88 but not TRIF through activation of PTPN6. The chain is CMRF35-like molecule 8 (Cd300a) from Mus musculus (Mouse).